Consider the following 287-residue polypeptide: Bifunctional protein FolD (287 aa).

NADP(+) contacts are provided by residues 165–167 (NRS), Ser-190, and Ile-233.

The protein belongs to the tetrahydrofolate dehydrogenase/cyclohydrolase family. Homodimer.

The enzyme catalyses (6R)-5,10-methylene-5,6,7,8-tetrahydrofolate + NADP(+) = (6R)-5,10-methenyltetrahydrofolate + NADPH. It catalyses the reaction (6R)-5,10-methenyltetrahydrofolate + H2O = (6R)-10-formyltetrahydrofolate + H(+). It participates in one-carbon metabolism; tetrahydrofolate interconversion. In terms of biological role, catalyzes the oxidation of 5,10-methylenetetrahydrofolate to 5,10-methenyltetrahydrofolate and then the hydrolysis of 5,10-methenyltetrahydrofolate to 10-formyltetrahydrofolate. The polypeptide is Bifunctional protein FolD (Nitrosopumilus maritimus (strain SCM1)).